Here is a 53-residue protein sequence, read N- to C-terminus: Reg12l (53 aa).

Positions 1 to 34 (RVLFRSGDQPADQPAERMQDISPEQNPLFHPDKR) are excised as a propeptide. Disulfide bonds link Cys-36-Cys-50, Cys-37-Cys-48, and Cys-42-Cys-51.

The protein belongs to the conotoxin M superfamily. As to expression, expressed by the venom duct.

The protein resides in the secreted. This chain is Reg12l, found in Conus regius (Crown cone).